The primary structure comprises 267 residues: Glutamate racemase (267 aa).

Substrate is bound by residues 10–11 (DS) and 42–43 (YG). Cys73 serves as the catalytic Proton donor/acceptor. Position 74 to 75 (74 to 75 (NT)) interacts with substrate. Cys183 (proton donor/acceptor) is an active-site residue. Position 184–185 (184–185 (TH)) interacts with substrate.

Belongs to the aspartate/glutamate racemases family.

It carries out the reaction L-glutamate = D-glutamate. Its pathway is cell wall biogenesis; peptidoglycan biosynthesis. Provides the (R)-glutamate required for cell wall biosynthesis. In Lactobacillus helveticus (strain DPC 4571), this protein is Glutamate racemase.